The chain runs to 222 residues: Pectate lyase A (222 aa).

The N-terminal stretch at 1 to 26 (MKKMLTLLLSAGLVASIFGVMPAAAA) is a signal peptide.

The protein belongs to the polysaccharide lyase 3 family. Requires Ca(2+) as cofactor.

Its subcellular location is the secreted. It catalyses the reaction Eliminative cleavage of (1-&gt;4)-alpha-D-galacturonan to give oligosaccharides with 4-deoxy-alpha-D-galact-4-enuronosyl groups at their non-reducing ends.. The catalysed reaction is Eliminative cleavage of (1-&gt;4)-alpha-D-galacturonan methyl ester to give oligosaccharides with 4-deoxy-6-O-methyl-alpha-D-galact-4-enuronosyl groups at their non-reducing ends.. It functions in the pathway glycan metabolism; pectin degradation. Its function is as follows. Catalyzes the depolymerization of both polygalacturonate and pectins with low (20-34%) and high (90%) levels of methyl esterification, with an endo mode of action. In contrast to the majority of pectate lyases, displays high activity on highly methylated pectins. Does not show xylanase and cellulase activity. This chain is Pectate lyase A, found in Paenibacillus amylolyticus.